The chain runs to 119 residues: Ribonuclease P protein component (119 aa).

This sequence belongs to the RnpA family. Consists of a catalytic RNA component (M1 or rnpB) and a protein subunit.

It carries out the reaction Endonucleolytic cleavage of RNA, removing 5'-extranucleotides from tRNA precursor.. RNaseP catalyzes the removal of the 5'-leader sequence from pre-tRNA to produce the mature 5'-terminus. It can also cleave other RNA substrates such as 4.5S RNA. The protein component plays an auxiliary but essential role in vivo by binding to the 5'-leader sequence and broadening the substrate specificity of the ribozyme. The polypeptide is Ribonuclease P protein component (Citrobacter koseri (strain ATCC BAA-895 / CDC 4225-83 / SGSC4696)).